Reading from the N-terminus, the 256-residue chain is Protein FixA (256 aa).

The protein belongs to the ETF beta-subunit/FixA family. In terms of assembly, heterodimer of FixA and FixB.

It functions in the pathway amine and polyamine metabolism; carnitine metabolism. Functionally, required for anaerobic carnitine reduction. May bring reductant to CaiA. The protein is Protein FixA of Salmonella paratyphi B (strain ATCC BAA-1250 / SPB7).